Reading from the N-terminus, the 635-residue chain is PTS system mannitol-specific EIICBA component (635 aa).

The 331-residue stretch at 12-342 folds into the PTS EIIC type-2 domain; the sequence is FGRFLSNMVM…LFKTSKVKER (331 aa). Transmembrane regions (helical) follow at residues 24–45, 50–70, 134–155, 165–185, 273–292, and 313–334; these read IGAFIAWGIITALFIPTGWLPN, KLVGPMITYLLPLLIGYTGGK, SAGIIGMILAILAFLGIGPAVE, VNFMVAHDMLPLASIFVEPAK, VILGGMTGVFTLTILNGGLV, and FANIAAIIAAMAVSFVVSAVLF. The region spanning 378–473 is the PTS EIIB type-2 domain; sequence RKIIVACDAG…RLVAAQRHID (96 aa). C384 acts as the Phosphocysteine intermediate; for EIIB activity in catalysis. Residue C384 is modified to Phosphocysteine; by EIIA. Residues 494-635 enclose the PTS EIIA type-2 domain; that stretch reads FQLGADNIFL…VDEVLALLNK (142 aa). The active-site Tele-phosphohistidine intermediate; for EIIA activity is H554. A Phosphohistidine; by HPr modification is found at H554.

Homodimer. Post-translationally, an intramolecular phosphotransfer takes places between His-554 and Cys-384.

Its subcellular location is the cell inner membrane. The enzyme catalyses D-mannitol(out) + N(pros)-phospho-L-histidyl-[protein] = D-mannitol 1-phosphate(in) + L-histidyl-[protein]. Functionally, the phosphoenolpyruvate-dependent sugar phosphotransferase system (sugar PTS), a major carbohydrate active transport system, catalyzes the phosphorylation of incoming sugar substrates concomitantly with their translocation across the cell membrane. This system is involved in D-mannitol transport. This is PTS system mannitol-specific EIICBA component from Klebsiella pneumoniae.